Here is a 94-residue protein sequence, read N- to C-terminus: CRISPR-associated endoribonuclease Cas2 (94 aa).

Asp-11 is a binding site for Mg(2+).

The protein belongs to the CRISPR-associated endoribonuclease Cas2 protein family. In terms of assembly, homodimer, forms a heterotetramer with a Cas1 homodimer. Mg(2+) serves as cofactor.

Functionally, CRISPR (clustered regularly interspaced short palindromic repeat), is an adaptive immune system that provides protection against mobile genetic elements (viruses, transposable elements and conjugative plasmids). CRISPR clusters contain sequences complementary to antecedent mobile elements and target invading nucleic acids. CRISPR clusters are transcribed and processed into CRISPR RNA (crRNA). Functions as a ssRNA-specific endoribonuclease. Involved in the integration of spacer DNA into the CRISPR cassette. The protein is CRISPR-associated endoribonuclease Cas2 of Allochromatium vinosum (strain ATCC 17899 / DSM 180 / NBRC 103801 / NCIMB 10441 / D) (Chromatium vinosum).